The sequence spans 616 residues: Angiotensin-converting enzyme (616 aa).

The N-terminal stretch at 1 to 23 (MNLINFSYLNLLFGAGLFSVLES) is a signal peptide. The Peptidase M2 domain occupies 27-610 (LNTESDAKKW…PRAENWMGGK (584 aa)). N-linked (GlcNAc...) asparagine glycans are attached at residues N61 and N96. A disulfide bond links C142 and C152. Chloride-binding residues include R180 and Y218. N303 is a glycosylation site (N-linked (GlcNAc...) asparagine). A disulfide bridge links C345 with C363. H376 provides a ligand contact to Zn(2+). Catalysis depends on E377, which acts as the Proton acceptor. H380 and E404 together coordinate Zn(2+). N428 carries N-linked (GlcNAc...) asparagine glycosylation. Chloride is bound by residues W478 and R482. Catalysis depends on H506, which acts as the Proton donor. R515 serves as a coordination point for chloride. The cysteines at positions 531 and 543 are disulfide-linked. N-linked (GlcNAc...) asparagine glycans are attached at residues N535 and N573.

This sequence belongs to the peptidase M2 family. Requires Zn(2+) as cofactor. The cofactor is chloride. Epithelial cells of the midgut.

The protein localises to the secreted. The protein resides in the extracellular space. The catalysed reaction is Release of a C-terminal dipeptide, oligopeptide-|-Xaa-Yaa, when Xaa is not Pro, and Yaa is neither Asp nor Glu. Thus, conversion of angiotensin I to angiotensin II, with increase in vasoconstrictor activity, but no action on angiotensin II.. With respect to regulation, activated by chloride. Inhibited by captopril and lisinopril, and to a lesser extent by delaprilat. In Theromyzon tessulatum (Duck leech), this protein is Angiotensin-converting enzyme (ACE).